The chain runs to 133 residues: Putative nickel-responsive regulator (133 aa).

Positions 74, 85, 87, and 93 each coordinate Ni(2+).

It belongs to the transcriptional regulatory CopG/NikR family. Ni(2+) is required as a cofactor.

In terms of biological role, transcriptional regulator. This Saccharolobus islandicus (strain Y.N.15.51 / Yellowstone #2) (Sulfolobus islandicus) protein is Putative nickel-responsive regulator.